A 168-amino-acid polypeptide reads, in one-letter code: MQEAGIGTTTDGIQEKLVAVRRTAKVVKGGRVFGFSALVVAGDGDGKVGFGLGKAREVPSAIQKATENARRNMISVPLYGATLHHAIKATHASSTVLMLPASEGTGVIAGNAMRAIFEVMGVQNVLAKCIGSSNPINVVRATFKGLKQMETPESVAAKRGKAIEEIVE.

The region spanning 13–76 (IQEKLVAVRR…ENARRNMISV (64 aa)) is the S5 DRBM domain.

It belongs to the universal ribosomal protein uS5 family. As to quaternary structure, part of the 30S ribosomal subunit. Contacts proteins S4 and S8.

Functionally, with S4 and S12 plays an important role in translational accuracy. Its function is as follows. Located at the back of the 30S subunit body where it stabilizes the conformation of the head with respect to the body. The protein is Small ribosomal subunit protein uS5 of Coxiella burnetii (strain RSA 493 / Nine Mile phase I).